A 291-amino-acid polypeptide reads, in one-letter code: MKEKEKLIIETALKLFAQKGYNSTSVQEIAKECKISKGAFYIYFPSKEALLLSMLNYYYDKTFTRILNIKTKGDSPRTAYRKQLTVLYENILEHKDFISMQLKEGSLPYTEEVEQCAKKIRQSSLQFHIDSLLNIYGKKAEPYTAELCFLIEGISQIYLECMILLGYTVKPSQLADIIMNRIDDMVKGMSERNDKPFITLEEASSLFGPLTHGRPDPLTESIVKSLRDKINSLNTNSSLELSESLDILEAEMKKKTPKLAIIKGMIHNLTESEALAKDAEQLKYLLKQQHI.

The region spanning 2–62 (KEKEKLIIET…SMLNYYYDKT (61 aa)) is the HTH tetR-type domain. Residues 25–44 (SVQEIAKECKISKGAFYIYF) constitute a DNA-binding region (H-T-H motif).

This is an uncharacterized protein from Bacillus subtilis (strain 168).